We begin with the raw amino-acid sequence, 31 residues long: Cytochrome b6-f complex subunit 6 (31 aa).

The helical transmembrane segment at 3–23 threads the bilayer; it reads LIIGYIILLACAFGLAAGLYF.

This sequence belongs to the PetL family. In terms of assembly, the 4 large subunits of the cytochrome b6-f complex are cytochrome b6, subunit IV (17 kDa polypeptide, PetD), cytochrome f and the Rieske protein, while the 4 small subunits are PetG, PetL, PetM and PetN. The complex functions as a dimer.

It is found in the plastid. The protein resides in the chloroplast thylakoid membrane. Component of the cytochrome b6-f complex, which mediates electron transfer between photosystem II (PSII) and photosystem I (PSI), cyclic electron flow around PSI, and state transitions. PetL is important for photoautotrophic growth as well as for electron transfer efficiency and stability of the cytochrome b6-f complex. The chain is Cytochrome b6-f complex subunit 6 from Guillardia theta (Cryptophyte).